The following is a 319-amino-acid chain: tRNA U34 carboxymethyltransferase (319 aa).

Residues Lys-88, Trp-102, Lys-107, Gly-126, 176-177 (LE), Met-192, Tyr-196, and Arg-311 contribute to the carboxy-S-adenosyl-L-methionine site.

This sequence belongs to the class I-like SAM-binding methyltransferase superfamily. CmoB family. In terms of assembly, homotetramer.

It catalyses the reaction carboxy-S-adenosyl-L-methionine + 5-hydroxyuridine(34) in tRNA = 5-carboxymethoxyuridine(34) in tRNA + S-adenosyl-L-homocysteine + H(+). Its function is as follows. Catalyzes carboxymethyl transfer from carboxy-S-adenosyl-L-methionine (Cx-SAM) to 5-hydroxyuridine (ho5U) to form 5-carboxymethoxyuridine (cmo5U) at position 34 in tRNAs. The sequence is that of tRNA U34 carboxymethyltransferase from Pseudomonas savastanoi pv. phaseolicola (strain 1448A / Race 6) (Pseudomonas syringae pv. phaseolicola (strain 1448A / Race 6)).